We begin with the raw amino-acid sequence, 175 residues long: ATP synthase subunit delta (175 aa).

It belongs to the ATPase delta chain family. As to quaternary structure, F-type ATPases have 2 components, F(1) - the catalytic core - and F(0) - the membrane proton channel. F(1) has five subunits: alpha(3), beta(3), gamma(1), delta(1), epsilon(1). F(0) has three main subunits: a(1), b(2) and c(10-14). The alpha and beta chains form an alternating ring which encloses part of the gamma chain. F(1) is attached to F(0) by a central stalk formed by the gamma and epsilon chains, while a peripheral stalk is formed by the delta and b chains.

It is found in the cell inner membrane. F(1)F(0) ATP synthase produces ATP from ADP in the presence of a proton or sodium gradient. F-type ATPases consist of two structural domains, F(1) containing the extramembraneous catalytic core and F(0) containing the membrane proton channel, linked together by a central stalk and a peripheral stalk. During catalysis, ATP synthesis in the catalytic domain of F(1) is coupled via a rotary mechanism of the central stalk subunits to proton translocation. Functionally, this protein is part of the stalk that links CF(0) to CF(1). It either transmits conformational changes from CF(0) to CF(1) or is implicated in proton conduction. The chain is ATP synthase subunit delta from Xanthomonas oryzae pv. oryzae (strain PXO99A).